Consider the following 749-residue polypeptide: Tryptophan 2-monooxygenase (749 aa).

Residues S232, E252, K260, and R280 each coordinate FMN. Substrate is bound at residue R280.

The protein belongs to the tryptophan 2-monooxygenase family. FMN serves as cofactor.

The catalysed reaction is L-tryptophan + O2 = indole-3-acetamide + CO2 + H2O. It functions in the pathway plant hormone metabolism; auxin biosynthesis. In Rhizobium rhizogenes (Agrobacterium rhizogenes), this protein is Tryptophan 2-monooxygenase (aux1).